We begin with the raw amino-acid sequence, 176 residues long: MRLSLAAAISHGRVYRRLGLGPESRIHLLRNLLTGLVRHERIEATWARADEMRGYAEKLIDYGKLGDTNERAMRMADFWLTEKDLIPKLFKVLAPRFQGQNGNYTRMLQIPNRKEQDRAKMAVIEYKGNYLPPLPLPHRDSNLTLLNQLLLGLQQDLHHNQDASLHSSCTVQTPKT.

A mitochondrion-targeting transit peptide spans 1–8; that stretch reads MRLSLAAA.

The protein belongs to the bacterial ribosomal protein bL17 family. Component of the mitochondrial ribosome large subunit (39S) which comprises a 16S rRNA and about 50 distinct proteins.

Its subcellular location is the mitochondrion. The sequence is that of Large ribosomal subunit protein bL17m (Mrpl17) from Mus musculus (Mouse).